The following is a 336-amino-acid chain: Flavonoid 6-O-methyltransferase 4 (336 aa).

S-adenosyl-L-methionine-binding residues include Y140 and D203. H241 acts as the Proton acceptor in catalysis.

It belongs to the class I-like SAM-binding methyltransferase superfamily. Cation-independent O-methyltransferase family. In terms of assembly, homodimer. As to expression, expressed in leaves.

The enzyme catalyses ladanein + S-adenosyl-L-methionine = salvigenin + S-adenosyl-L-homocysteine + H(+). It catalyses the reaction scutellarein 7-methyl ether + S-adenosyl-L-methionine = cirsimaritin + S-adenosyl-L-homocysteine + H(+). It participates in flavonoid metabolism. Functionally, flavonoid 6-O-methyltransferase involved in the biosynthesis of polymethoxylated flavonoids natural products such as nevadensin and salvigenin (SALV), aroma compounds which contribute to the flavor of sweet basil, and exhibit pharmacological activities such as anti-allergic, anti-oxidant, antibacterial, anti-proliferative, and anti-inflammatory effects. Catalyzes S-adenosylmethionine-dependent regioselective 6-O-methylation of flavonoids; active on various hydroxylated flavonoid substrates, including scutellarein-7-methyl ether (SCU7Me) and ladanein (LAD). This chain is Flavonoid 6-O-methyltransferase 4, found in Ocimum basilicum (Sweet basil).